Here is a 1952-residue protein sequence, read N- to C-terminus: Protein ROS1A (1952 aa).

4 disordered regions span residues 72–157, 693–778, 1302–1334, and 1367–1398; these read EVVG…CRSE, IIRP…ESTS, HGTS…DDNV, and LIEN…AGKK. Basic residues-rich tracts occupy residues 90–102 and 130–139; these read PARK…HRPK and GKRKYVRKKT. 2 stretches are compositionally biased toward basic and acidic residues: residues 709 to 720 and 727 to 747; these read PRTDNHQVKVSE and LPEK…EKPK. Residues 769 to 778 show a composition bias toward polar residues; sequence TNPLQNESTS. The span at 1388-1398 shows a compositional bias: basic residues; sequence AKRPRVGAGKK. [4Fe-4S] cluster is bound by residues C1582, C1589, C1592, and C1598.

The protein belongs to the DNA glycosylase family. DEMETER subfamily. It depends on [4Fe-4S] cluster as a cofactor. Expressed in roots, leaf blades, leaf sheaths, apical and lateral shoot meristems, inflorescence meristems, lodicules, pollen grains, ovules and seeds. Expressed in vascular tissues of roots and leaves, pollen grains, pericarp, aleurone, and starchy endosperm.

The protein localises to the nucleus. Functionally, bifunctional DNA glycosylase/lyase, which excises 5-methylcytosine (5-meC) and 5-hydroxymethylcytosine (5-hmeC), leaving an apyrimidinic (AP) site that is subsequently incised by the lyase activity. DNA demethylase that is indispensable in both male and female gametophyte development. Involved in the regulation of DNA methylation in the promoters of RISBZ1/BZIP58 and DOF3/RPBF, two transcription factors that functions synergistically to positively regulate genes that are key players in the development of aleurone layers. Active DNA demethylation carried out by ROS1A in rice endosperms may restrict the number of aleurone cell layers. The sequence is that of Protein ROS1A from Oryza sativa subsp. japonica (Rice).